A 96-amino-acid chain; its full sequence is Pyrimidine/purine nucleoside phosphorylase (96 aa).

It belongs to the nucleoside phosphorylase PpnP family.

It catalyses the reaction a purine D-ribonucleoside + phosphate = a purine nucleobase + alpha-D-ribose 1-phosphate. The catalysed reaction is adenosine + phosphate = alpha-D-ribose 1-phosphate + adenine. The enzyme catalyses cytidine + phosphate = cytosine + alpha-D-ribose 1-phosphate. It carries out the reaction guanosine + phosphate = alpha-D-ribose 1-phosphate + guanine. It catalyses the reaction inosine + phosphate = alpha-D-ribose 1-phosphate + hypoxanthine. The catalysed reaction is thymidine + phosphate = 2-deoxy-alpha-D-ribose 1-phosphate + thymine. The enzyme catalyses uridine + phosphate = alpha-D-ribose 1-phosphate + uracil. It carries out the reaction xanthosine + phosphate = alpha-D-ribose 1-phosphate + xanthine. In terms of biological role, catalyzes the phosphorolysis of diverse nucleosides, yielding D-ribose 1-phosphate and the respective free bases. Can use uridine, adenosine, guanosine, cytidine, thymidine, inosine and xanthosine as substrates. Also catalyzes the reverse reactions. The polypeptide is Pyrimidine/purine nucleoside phosphorylase (Serratia proteamaculans (strain 568)).